A 960-amino-acid polypeptide reads, in one-letter code: Phosphoenolpyruvate carboxylase 2 (960 aa).

Residues H167 and K595 contribute to the active site.

The protein belongs to the PEPCase type 1 family. Homotetramer. Mg(2+) serves as cofactor.

Its subcellular location is the cytoplasm. The catalysed reaction is oxaloacetate + phosphate = phosphoenolpyruvate + hydrogencarbonate. The protein operates within photosynthesis; C3 acid pathway. Its function is as follows. Through the carboxylation of phosphoenolpyruvate (PEP) it forms oxaloacetate, a four-carbon dicarboxylic acid source for the tricarboxylic acid cycle. This is Phosphoenolpyruvate carboxylase 2 from Sorghum bicolor (Sorghum).